The following is a 336-amino-acid chain: tRNA N6-adenosine threonylcarbamoyltransferase (336 aa).

Fe cation contacts are provided by His-114 and His-118. Residues 136-140 (LVSGG), Asp-169, Gly-182, Asp-186, and Asn-275 contribute to the substrate site. Position 301 (Asp-301) interacts with Fe cation.

It belongs to the KAE1 / TsaD family. Fe(2+) serves as cofactor.

The protein localises to the cytoplasm. It catalyses the reaction L-threonylcarbamoyladenylate + adenosine(37) in tRNA = N(6)-L-threonylcarbamoyladenosine(37) in tRNA + AMP + H(+). Functionally, required for the formation of a threonylcarbamoyl group on adenosine at position 37 (t(6)A37) in tRNAs that read codons beginning with adenine. Is involved in the transfer of the threonylcarbamoyl moiety of threonylcarbamoyl-AMP (TC-AMP) to the N6 group of A37, together with TsaE and TsaB. TsaD likely plays a direct catalytic role in this reaction. The sequence is that of tRNA N6-adenosine threonylcarbamoyltransferase from Streptococcus pneumoniae (strain P1031).